The sequence spans 800 residues: Phenylalanine--tRNA ligase beta subunit (800 aa).

The tRNA-binding domain maps to 39–154; that stretch reads TKDIKNLVVG…EAQVPGTDAL (116 aa). A B5 domain is found at 408–483; that stretch reads AFITPIDITA…RIYGYDDIPS (76 aa). 4 residues coordinate Mg(2+): Asp-461, Asp-467, Glu-470, and Glu-471. The FDX-ACB domain maps to 708-800; it reads PRFPGMSRDI…ALIEQGAVIR (93 aa).

Belongs to the phenylalanyl-tRNA synthetase beta subunit family. Type 1 subfamily. In terms of assembly, tetramer of two alpha and two beta subunits. The cofactor is Mg(2+).

It localises to the cytoplasm. It catalyses the reaction tRNA(Phe) + L-phenylalanine + ATP = L-phenylalanyl-tRNA(Phe) + AMP + diphosphate + H(+). The chain is Phenylalanine--tRNA ligase beta subunit from Staphylococcus aureus (strain COL).